Consider the following 85-residue polypeptide: Small ribosomal subunit protein uS17 (85 aa).

Belongs to the universal ribosomal protein uS17 family. In terms of assembly, part of the 30S ribosomal subunit.

In terms of biological role, one of the primary rRNA binding proteins, it binds specifically to the 5'-end of 16S ribosomal RNA. The chain is Small ribosomal subunit protein uS17 from Mesoplasma florum (strain ATCC 33453 / NBRC 100688 / NCTC 11704 / L1) (Acholeplasma florum).